Here is a 305-residue protein sequence, read N- to C-terminus: Ribonuclease Z (305 aa).

Residues His61, His63, Asp65, His66, His141, Asp209, and His268 each contribute to the Zn(2+) site. Residue Asp65 is the Proton acceptor of the active site.

The protein belongs to the RNase Z family. In terms of assembly, homodimer. It depends on Zn(2+) as a cofactor.

It carries out the reaction Endonucleolytic cleavage of RNA, removing extra 3' nucleotides from tRNA precursor, generating 3' termini of tRNAs. A 3'-hydroxy group is left at the tRNA terminus and a 5'-phosphoryl group is left at the trailer molecule.. Its function is as follows. Zinc phosphodiesterase, which displays some tRNA 3'-processing endonuclease activity. Probably involved in tRNA maturation, by removing a 3'-trailer from precursor tRNA. This Clostridioides difficile (strain 630) (Peptoclostridium difficile) protein is Ribonuclease Z.